The chain runs to 185 residues: Threonylcarbamoyl-AMP synthase (185 aa).

The YrdC-like domain maps to 4–185; it reads SWRVQQAAQN…IATGQVMRAG (182 aa).

The protein belongs to the SUA5 family. TsaC subfamily.

Its subcellular location is the cytoplasm. The enzyme catalyses L-threonine + hydrogencarbonate + ATP = L-threonylcarbamoyladenylate + diphosphate + H2O. Its function is as follows. Required for the formation of a threonylcarbamoyl group on adenosine at position 37 (t(6)A37) in tRNAs that read codons beginning with adenine. Catalyzes the conversion of L-threonine, HCO(3)(-)/CO(2) and ATP to give threonylcarbamoyl-AMP (TC-AMP) as the acyladenylate intermediate, with the release of diphosphate. The chain is Threonylcarbamoyl-AMP synthase from Pseudomonas syringae pv. tomato (strain ATCC BAA-871 / DC3000).